The following is an 81-amino-acid chain: Short neurotoxin SN160 (81 aa).

Positions 1-21 (MKTLLLTLVVVTIVCLDLGYT) are cleaved as a signal peptide. 4 disulfides stabilise this stretch: Cys-24-Cys-43, Cys-38-Cys-60, Cys-62-Cys-73, and Cys-74-Cys-79.

It belongs to the three-finger toxin family. Short-chain subfamily. Type I alpha-neurotoxin sub-subfamily. Expressed by the venom gland.

It localises to the secreted. In terms of biological role, binds to muscle nicotinic acetylcholine receptor (nAChR) and inhibit acetylcholine from binding to the receptor, thereby impairing neuromuscular transmission. This chain is Short neurotoxin SN160, found in Hydrophis hardwickii (Hardwick's spine-bellied seasnake).